We begin with the raw amino-acid sequence, 469 residues long: Uronate isomerase (469 aa).

This sequence belongs to the metallo-dependent hydrolases superfamily. Uronate isomerase family.

The catalysed reaction is D-glucuronate = D-fructuronate. It carries out the reaction aldehydo-D-galacturonate = keto-D-tagaturonate. The protein operates within carbohydrate metabolism; pentose and glucuronate interconversion. This is Uronate isomerase from Yersinia pseudotuberculosis serotype O:1b (strain IP 31758).